A 560-amino-acid polypeptide reads, in one-letter code: Putative transport protein ESA_02488 (560 aa).

Transmembrane regions (helical) follow at residues 8–28 (LLNG…LCLG), 32–52 (LGSV…LLGQ), 66–86 (FMLF…SIFF), 91–111 (NYLM…LGLG), and 158–178 (HLSL…IFGA). RCK C-terminal domains are found at residues 200–288 (RGLD…SFRN) and 292–373 (VFDR…RIGF). The next 5 helical transmembrane spans lie at 383-403 (LLAF…TFQF), 406-426 (FSFG…LGFL), 447-467 (FGLM…IGHG), 475-495 (MLFA…LFGA), and 539-559 (YAIA…IWPG).

Belongs to the AAE transporter (TC 2.A.81) family. YbjL subfamily.

The protein localises to the cell membrane. In Cronobacter sakazakii (strain ATCC BAA-894) (Enterobacter sakazakii), this protein is Putative transport protein ESA_02488.